Consider the following 866-residue polypeptide: Probable LRR receptor-like serine/threonine-protein kinase At5g16900 (866 aa).

The signal sequence occupies residues 1-20 (MEDRHRYLFFIFAIIHYVQA). At 21–515 (QQGFISLDCG…SSSGNKETTV (495 aa)) the chain is on the extracellular side. Residues Asn-137, Asn-176, Asn-230, Asn-251, Asn-331, Asn-404, Asn-409, and Asn-436 are each glycosylated (N-linked (GlcNAc...) asparagine). LRR repeat units follow at residues 415 to 438 (RIISLDLSSHKLTGKIVPDIQNLT), 439 to 461 (QLQKLDLSNNKLTGGVPEFLANM), and 463 to 485 (SLLFINLSNNNLVGSIPQALLDR). 2 N-linked (GlcNAc...) asparagine glycosylation sites follow: Asn-468 and Asn-505. A helical membrane pass occupies residues 516–536 (IAPVAAAIAIFIAVLVLIIVF). At 537–866 (IKKRPSSIRA…LNQVIDSKSS (330 aa)) the chain is on the cytoplasmic side. Thr-564 carries the phosphothreonine modification. Residues 573 to 846 (NNFERVIGEG…HVVQELKQCI (274 aa)) enclose the Protein kinase domain. ATP contacts are provided by residues 579-587 (IGEGGFGVV) and Lys-601. Phosphotyrosine is present on Tyr-646. Asp-698 (proton acceptor) is an active-site residue. Phosphoserine is present on Ser-732. Thr-733 and Thr-738 each carry phosphothreonine. Tyr-746 is modified (phosphotyrosine).

Belongs to the protein kinase superfamily. Ser/Thr protein kinase family.

The protein resides in the membrane. The catalysed reaction is L-seryl-[protein] + ATP = O-phospho-L-seryl-[protein] + ADP + H(+). It carries out the reaction L-threonyl-[protein] + ATP = O-phospho-L-threonyl-[protein] + ADP + H(+). This chain is Probable LRR receptor-like serine/threonine-protein kinase At5g16900, found in Arabidopsis thaliana (Mouse-ear cress).